Reading from the N-terminus, the 85-residue chain is Acyl carrier protein (85 aa).

Residues aspartate 4–leucine 79 enclose the Carrier domain. Serine 39 carries the O-(pantetheine 4'-phosphoryl)serine modification.

It belongs to the acyl carrier protein (ACP) family. In terms of processing, 4'-phosphopantetheine is transferred from CoA to a specific serine of apo-ACP by AcpS. This modification is essential for activity because fatty acids are bound in thioester linkage to the sulfhydryl of the prosthetic group.

It is found in the cytoplasm. It participates in lipid metabolism; fatty acid biosynthesis. Carrier of the growing fatty acid chain in fatty acid biosynthesis. The sequence is that of Acyl carrier protein from Petrotoga mobilis (strain DSM 10674 / SJ95).